We begin with the raw amino-acid sequence, 555 residues long: (+)-delta-cadinene synthase isozyme A (555 aa).

The disordered stretch occupies residues 1-22; that stretch reads MASQASQVLASPHPAISSENRP. Mg(2+) is bound by residues Asp-308, Asp-312, Asp-452, and Glu-456. Residues 308–312 carry the DDXXD motif motif; that stretch reads DDTYD.

The protein belongs to the terpene synthase family. Requires Mg(2+) as cofactor.

The enzyme catalyses (2E,6E)-farnesyl diphosphate = (1S,8aR)-delta-cadinene + diphosphate. The protein operates within secondary metabolite biosynthesis; terpenoid biosynthesis. Functionally, responsible for the cyclization of trans,trans-farnesyl diphosphate (FPP) to (+)-delta cadinene. The protein is (+)-delta-cadinene synthase isozyme A (CAD1-A) of Gossypium arboreum (Tree cotton).